Here is a 285-residue protein sequence, read N- to C-terminus: mRNA decay factor CTH2 (285 aa).

Positions 37-55 (INIRELEEYYNKTILNEDN) are required for mRNA decay activity. Positions 132-164 (LQQLSQQKPKNDASFSSEKESSAQPKVKSQVQE) are disordered. Residues 153–164 (SAQPKVKSQVQE) show a composition bias toward polar residues. C3H1-type zinc fingers lie at residues 169-197 (LYKT…HGLG) and 207-235 (NFRT…HGDD). The disordered stretch occupies residues 252-271 (STSKQSDEKRSNGRGSAKKK).

Interacts with DHH1.

Its subcellular location is the nucleus. It localises to the cytoplasm. It is found in the P-body. Functionally, binds to specific AU-rich elements (ARE) in the 3'-untranslated region of target mRNAs and promotes their degradation. In response to iron deficiency, promotes the decay of many mRNAs encoding proteins involved in iron-dependent pathways. Recruits the DHH1 helicase to the SDH4 mRNA and promotes SDH4 mRNA decay. Also destabilizes target mRNA by modulating 3'-end processing, creating extended transcripts that are prone for degradation. This Saccharomyces cerevisiae (strain ATCC 204508 / S288c) (Baker's yeast) protein is mRNA decay factor CTH2 (TIS11).